Reading from the N-terminus, the 274-residue chain is uncharacterized protein (274 aa).

The segment covering 1-17 (MTQLTNFSESFSNQNSN) has biased composition (low complexity). Disordered regions lie at residues 1-38 (MTQLTNFSESFSNQNSNLHQPYNFNSHQPPEENHYYVR) and 222-274 (ELGT…MEFE). The span at 18-28 (LHQPYNFNSHQ) shows a compositional bias: polar residues. The span at 29–38 (PPEENHYYVR) shows a compositional bias: basic and acidic residues. Polar residues-rich tracts occupy residues 239–249 (PMASPTGSSQI) and 256–265 (SPNSLTNGSV).

This is an uncharacterized protein from Caenorhabditis elegans.